The chain runs to 114 residues: MSVPTQITFFEFLTPLVASGQKTITIRDKSESHYVPGTRVEVFTLETQRKVCEIDILAVEPLKFDEINEFHAEQEAIELPKLKALIQEIYPNIDELYVITYQLAKSSSARIMVK.

The ASCH domain occupies 8–93; that stretch reads TFFEFLTPLV…ALIQEIYPNI (86 aa). Lys-22 acts as the Proton acceptor in catalysis. Thr-25 serves as the catalytic Nucleophile. Glu-75 (proton donor) is an active-site residue.

This sequence belongs to the N(4)-acetylcytidine amidohydrolase family.

It catalyses the reaction N(4)-acetylcytidine + H2O = cytidine + acetate + H(+). It carries out the reaction N(4)-acetyl-2'-deoxycytidine + H2O = 2'-deoxycytidine + acetate + H(+). The enzyme catalyses N(4)-acetylcytosine + H2O = cytosine + acetate + H(+). In terms of biological role, catalyzes the hydrolysis of N(4)-acetylcytidine (ac4C). This chain is N(4)-acetylcytidine amidohydrolase, found in Vibrio cholerae serotype O1 (strain ATCC 39541 / Classical Ogawa 395 / O395).